The following is a 480-amino-acid chain: UDP-N-acetylmuramoyl-L-alanyl-D-glutamate--2,6-diaminopimelate ligase (480 aa).

Ser-21 is a binding site for UDP-N-acetyl-alpha-D-muramoyl-L-alanyl-D-glutamate. 98-104 is an ATP binding site; that stretch reads GTNGKSS. Residues 144–145, Ser-171, Gln-177, and Arg-179 each bind UDP-N-acetyl-alpha-D-muramoyl-L-alanyl-D-glutamate; that span reads TT. Lys-211 carries the N6-carboxylysine modification. Meso-2,6-diaminopimelate contacts are provided by residues Arg-372, 396–399, Gly-446, and Glu-450; that span reads DNPR. Positions 396 to 399 match the Meso-diaminopimelate recognition motif motif; the sequence is DNPR.

It belongs to the MurCDEF family. MurE subfamily. Mg(2+) serves as cofactor. Carboxylation is probably crucial for Mg(2+) binding and, consequently, for the gamma-phosphate positioning of ATP.

It is found in the cytoplasm. The enzyme catalyses UDP-N-acetyl-alpha-D-muramoyl-L-alanyl-D-glutamate + meso-2,6-diaminopimelate + ATP = UDP-N-acetyl-alpha-D-muramoyl-L-alanyl-gamma-D-glutamyl-meso-2,6-diaminopimelate + ADP + phosphate + H(+). Its pathway is cell wall biogenesis; peptidoglycan biosynthesis. Its function is as follows. Catalyzes the addition of meso-diaminopimelic acid to the nucleotide precursor UDP-N-acetylmuramoyl-L-alanyl-D-glutamate (UMAG) in the biosynthesis of bacterial cell-wall peptidoglycan. This Rickettsia prowazekii (strain Madrid E) protein is UDP-N-acetylmuramoyl-L-alanyl-D-glutamate--2,6-diaminopimelate ligase.